A 31-amino-acid polypeptide reads, in one-letter code: Cytochrome b6-f complex subunit 6 (31 aa).

Residues 3–23 (TLTSYFGFLLVALTITLVLFI) traverse the membrane as a helical segment.

The protein belongs to the PetL family. As to quaternary structure, the 4 large subunits of the cytochrome b6-f complex are cytochrome b6, subunit IV (17 kDa polypeptide, PetD), cytochrome f and the Rieske protein, while the 4 small subunits are PetG, PetL, PetM and PetN. The complex functions as a dimer.

The protein localises to the plastid. It localises to the chloroplast thylakoid membrane. In terms of biological role, component of the cytochrome b6-f complex, which mediates electron transfer between photosystem II (PSII) and photosystem I (PSI), cyclic electron flow around PSI, and state transitions. PetL is important for photoautotrophic growth as well as for electron transfer efficiency and stability of the cytochrome b6-f complex. This chain is Cytochrome b6-f complex subunit 6, found in Populus alba (White poplar).